Here is an 88-residue protein sequence, read N- to C-terminus: Small ribosomal subunit protein bS20 (88 aa).

Positions 1-28 are disordered; it reads MANIKSQIKRNRQNEKRRLRNKSVKSSL. Residues 7–23 show a composition bias toward basic residues; it reads QIKRNRQNEKRRLRNKS.

Belongs to the bacterial ribosomal protein bS20 family.

Its function is as follows. Binds directly to 16S ribosomal RNA. The protein is Small ribosomal subunit protein bS20 of Salinispora tropica (strain ATCC BAA-916 / DSM 44818 / JCM 13857 / NBRC 105044 / CNB-440).